Consider the following 189-residue polypeptide: Large ribosomal subunit protein bL9 (189 aa).

This sequence belongs to the bacterial ribosomal protein bL9 family.

In terms of biological role, binds to the 23S rRNA. The polypeptide is Large ribosomal subunit protein bL9 (Brucella anthropi (strain ATCC 49188 / DSM 6882 / CCUG 24695 / JCM 21032 / LMG 3331 / NBRC 15819 / NCTC 12168 / Alc 37) (Ochrobactrum anthropi)).